We begin with the raw amino-acid sequence, 251 residues long: Triosephosphate isomerase (251 aa).

Substrate is bound at residue 9–11 (NWK). The active-site Electrophile is His95. Glu167 (proton acceptor) is an active-site residue. Substrate contacts are provided by residues Gly173, Ser213, and 234–235 (GG).

It belongs to the triosephosphate isomerase family. Homodimer.

Its subcellular location is the cytoplasm. It catalyses the reaction D-glyceraldehyde 3-phosphate = dihydroxyacetone phosphate. Its pathway is carbohydrate biosynthesis; gluconeogenesis. It participates in carbohydrate degradation; glycolysis; D-glyceraldehyde 3-phosphate from glycerone phosphate: step 1/1. In terms of biological role, involved in the gluconeogenesis. Catalyzes stereospecifically the conversion of dihydroxyacetone phosphate (DHAP) to D-glyceraldehyde-3-phosphate (G3P). The sequence is that of Triosephosphate isomerase from Lactobacillus gasseri (strain ATCC 33323 / DSM 20243 / BCRC 14619 / CIP 102991 / JCM 1131 / KCTC 3163 / NCIMB 11718 / NCTC 13722 / AM63).